The primary structure comprises 167 residues: Endoribonuclease YbeY (167 aa).

3 residues coordinate Zn(2+): histidine 131, histidine 135, and histidine 141.

It belongs to the endoribonuclease YbeY family. Requires Zn(2+) as cofactor.

Its subcellular location is the cytoplasm. Functionally, single strand-specific metallo-endoribonuclease involved in late-stage 70S ribosome quality control and in maturation of the 3' terminus of the 16S rRNA. The sequence is that of Endoribonuclease YbeY from Rickettsia akari (strain Hartford).